Reading from the N-terminus, the 444-residue chain is Chromosomal replication initiator protein DnaA (444 aa).

The domain I, interacts with DnaA modulators stretch occupies residues 1–66; sequence MKSEIIESLK…SKTLRELFGK (66 aa). The domain II stretch occupies residues 66–100; that stretch reads KPMDFRIEHASAKTEEKLDSNEDEPLVKKRPLILT. Residues 101-317 form a domain III, AAA+ region region; the sequence is PLNPILTFEN…GALVKLIMYQ (217 aa). ATP contacts are provided by G144, G146, K147, and T148. Residues 318 to 444 form a domain IV, binds dsDNA region; that stretch reads QISGEKVDLQ…VTGQILDQSV (127 aa).

It belongs to the DnaA family. As to quaternary structure, oligomerizes as a right-handed, spiral filament on DNA at oriC.

The protein resides in the cytoplasm. Its function is as follows. Plays an essential role in the initiation and regulation of chromosomal replication. ATP-DnaA binds to the origin of replication (oriC) to initiate formation of the DNA replication initiation complex once per cell cycle. Binds the DnaA box (a 9 base pair repeat at the origin) and separates the double-stranded (ds)DNA. Forms a right-handed helical filament on oriC DNA; dsDNA binds to the exterior of the filament while single-stranded (ss)DNA is stabiized in the filament's interior. The ATP-DnaA-oriC complex binds and stabilizes one strand of the AT-rich DNA unwinding element (DUE), permitting loading of DNA polymerase. After initiation quickly degrades to an ADP-DnaA complex that is not apt for DNA replication. Binds acidic phospholipids. This is Chromosomal replication initiator protein DnaA from Pseudothermotoga lettingae (strain ATCC BAA-301 / DSM 14385 / NBRC 107922 / TMO) (Thermotoga lettingae).